A 519-amino-acid polypeptide reads, in one-letter code: Cell division cycle protein 20 homolog B (519 aa).

Positions 79–98 (QSQTRALSSDSFGEEQSTTY) are enriched in polar residues. The interval 79 to 133 (QSQTRALSSDSFGEEQSTTYLPEASGSVLKTPPEKETLTLGSRKEQLKTPSKGIS) is disordered. The span at 110-125 (PPEKETLTLGSRKEQL) shows a compositional bias: basic and acidic residues. WD repeat units follow at residues 229 to 266 (RNDYYLNILDWSFQNLVAIALGSAVYIWNGENHNGIEN), 271 to 310 (LTCNYISSVSWIKEGTCLAVGTSEGEVQLWDVVTKKRLRN), 311 to 341 (MLGHLSVVGALSWNHFILSSGSRLGRVYHHD), 353 to 392 (RHKQAVCALKWSPDGRLLSSGCSDGLLTIWPHDPGASAQG), 399 to 441 (TQST…SIQT), 443 to 484 (STNS…RSGG), and 487 to 519 (GHRGRVLHLSLSPDQTRVFSAAADGTASVWNCY).

Belongs to the WD repeat CDC20/Fizzy family. Expressed in multiciliated cells (MCCs).

The protein resides in the cytoplasm. Functionally, protein regulator of centriole-deuterosome disengagement and subsequently participates in the ciliogenesis in multiciliated cells (MCCs). This Homo sapiens (Human) protein is Cell division cycle protein 20 homolog B.